A 268-amino-acid chain; its full sequence is Ribosomal RNA small subunit methyltransferase A (268 aa).

6 residues coordinate S-adenosyl-L-methionine: N16, L18, G43, E64, D89, and N110.

It belongs to the class I-like SAM-binding methyltransferase superfamily. rRNA adenine N(6)-methyltransferase family. RsmA subfamily.

The protein localises to the cytoplasm. It catalyses the reaction adenosine(1518)/adenosine(1519) in 16S rRNA + 4 S-adenosyl-L-methionine = N(6)-dimethyladenosine(1518)/N(6)-dimethyladenosine(1519) in 16S rRNA + 4 S-adenosyl-L-homocysteine + 4 H(+). Functionally, specifically dimethylates two adjacent adenosines (A1518 and A1519) in the loop of a conserved hairpin near the 3'-end of 16S rRNA in the 30S particle. May play a critical role in biogenesis of 30S subunits. The polypeptide is Ribosomal RNA small subunit methyltransferase A (Pseudomonas syringae pv. syringae (strain B728a)).